Here is a 744-residue protein sequence, read N- to C-terminus: NAD(P)H-quinone oxidoreductase subunit 5, chloroplastic (744 aa).

The next 16 helical transmembrane spans lie at 9 to 29 (WIIPFLPLPVPMLIGLGLLLF), 40 to 60 (WAFQSVLLLSIVMIFSMNLSI), 89 to 109 (IDPLTSIMSILITTVGIMVLI), 125 to 145 (FAYMSFFSTSMLGLVTSSNLI), 147 to 167 (IYIFWELVGICSYLLIGFWFT), 185 to 205 (GDFGLLLGILGFYWITGSFEF), 219 to 239 (NEVNLLFVTLCAVLLFAGAIA), 258 to 278 (TPISALIHAATMVAAGIFLVA), 290 to 312 (IMNFISLIGIITVFLGATLALAQ), 327 to 347 (LGYMMLALGMGSYRSALFHLI), 354 to 374 (ALLFLGSGSVIHSMETLVGYC), 396 to 416 (TSFLLGTLSLCGIPPLACFWS), 425 to 445 (WLYSPIFAIIAWSTAGLTAFY), 549 to 569 (LFPILILVLFTLFVGFLGIPF), 608 to 628 (VFSVTISSFGIFIAFFLYKPV), and 724 to 744 (YLFFYFSYVSIFLVIYYFLNF).

This sequence belongs to the complex I subunit 5 family. As to quaternary structure, NDH is composed of at least 16 different subunits, 5 of which are encoded in the nucleus.

Its subcellular location is the plastid. The protein localises to the chloroplast thylakoid membrane. It carries out the reaction a plastoquinone + NADH + (n+1) H(+)(in) = a plastoquinol + NAD(+) + n H(+)(out). The catalysed reaction is a plastoquinone + NADPH + (n+1) H(+)(in) = a plastoquinol + NADP(+) + n H(+)(out). In terms of biological role, NDH shuttles electrons from NAD(P)H:plastoquinone, via FMN and iron-sulfur (Fe-S) centers, to quinones in the photosynthetic chain and possibly in a chloroplast respiratory chain. The immediate electron acceptor for the enzyme in this species is believed to be plastoquinone. Couples the redox reaction to proton translocation, and thus conserves the redox energy in a proton gradient. The polypeptide is NAD(P)H-quinone oxidoreductase subunit 5, chloroplastic (ndhF) (Adenocaulon himalaicum (Trailplant)).